The following is a 577-amino-acid chain: Urease subunit alpha (577 aa).

Residues Gly-136 to Phe-577 enclose the Urease domain. Residues His-141, His-143, and Lys-224 each coordinate Ni(2+). The residue at position 224 (Lys-224) is an N6-carboxylysine. His-226 contacts substrate. The Ni(2+) site is built by His-253 and His-279. His-327 (proton donor) is an active-site residue. Position 367 (Asp-367) interacts with Ni(2+).

This sequence belongs to the metallo-dependent hydrolases superfamily. Urease alpha subunit family. Heterotrimer of UreA (gamma), UreB (beta) and UreC (alpha) subunits. Three heterotrimers associate to form the active enzyme. Requires Ni cation as cofactor. Carboxylation allows a single lysine to coordinate two nickel ions.

It is found in the cytoplasm. It catalyses the reaction urea + 2 H2O + H(+) = hydrogencarbonate + 2 NH4(+). The protein operates within nitrogen metabolism; urea degradation; CO(2) and NH(3) from urea (urease route): step 1/1. The chain is Urease subunit alpha from Mycobacteroides abscessus (strain ATCC 19977 / DSM 44196 / CCUG 20993 / CIP 104536 / JCM 13569 / NCTC 13031 / TMC 1543 / L948) (Mycobacterium abscessus).